The primary structure comprises 233 residues: 5'-methylthioadenosine/S-adenosylhomocysteine nucleosidase (233 aa).

Catalysis depends on Glu-12, which acts as the Proton acceptor. Substrate contacts are provided by residues Gly-78, Ile-152, and 173–174; that span reads ME. Catalysis depends on Asp-197, which acts as the Proton donor.

This sequence belongs to the PNP/UDP phosphorylase family. MtnN subfamily. In terms of assembly, homodimer.

It carries out the reaction S-adenosyl-L-homocysteine + H2O = S-(5-deoxy-D-ribos-5-yl)-L-homocysteine + adenine. It catalyses the reaction S-methyl-5'-thioadenosine + H2O = 5-(methylsulfanyl)-D-ribose + adenine. The catalysed reaction is 5'-deoxyadenosine + H2O = 5-deoxy-D-ribose + adenine. Its pathway is amino-acid biosynthesis; L-methionine biosynthesis via salvage pathway; S-methyl-5-thio-alpha-D-ribose 1-phosphate from S-methyl-5'-thioadenosine (hydrolase route): step 1/2. Functionally, catalyzes the irreversible cleavage of the glycosidic bond in both 5'-methylthioadenosine (MTA) and S-adenosylhomocysteine (SAH/AdoHcy) to adenine and the corresponding thioribose, 5'-methylthioribose and S-ribosylhomocysteine, respectively. Also cleaves 5'-deoxyadenosine, a toxic by-product of radical S-adenosylmethionine (SAM) enzymes, into 5-deoxyribose and adenine. Thus, is required for in vivo function of the radical SAM enzymes biotin synthase and lipoic acid synthase, that are inhibited by 5'-deoxyadenosine accumulation. The polypeptide is 5'-methylthioadenosine/S-adenosylhomocysteine nucleosidase (Yersinia pestis bv. Antiqua (strain Angola)).